The primary structure comprises 232 residues: MSILDSIQRQIPPIHKEGYPFIGGFALASLILFWLWSPLGWIGTILTVWCALFFRDPVRVTPVREGLVVSPADGRVSMITMALPPAELGLGDRPLPRISVFMSVFNCHVNRSPIAGRVDRIAYRPGLFINAELDKASEDNERNSLVITTPTARIGVVQIAGLIAKRIVCFVREGQAIGAGERFGLIRFGSRLDVYLPVGTKALVSEGQTAIAGETILADLAGDDPSRAYRAN.

Catalysis depends on serine 190, which acts as the Schiff-base intermediate with substrate; via pyruvic acid. Residue serine 190 is modified to Pyruvic acid (Ser); by autocatalysis.

Belongs to the phosphatidylserine decarboxylase family. PSD-A subfamily. In terms of assembly, heterodimer of a large membrane-associated beta subunit and a small pyruvoyl-containing alpha subunit. The cofactor is pyruvate. Is synthesized initially as an inactive proenzyme. Formation of the active enzyme involves a self-maturation process in which the active site pyruvoyl group is generated from an internal serine residue via an autocatalytic post-translational modification. Two non-identical subunits are generated from the proenzyme in this reaction, and the pyruvate is formed at the N-terminus of the alpha chain, which is derived from the carboxyl end of the proenzyme. The post-translation cleavage follows an unusual pathway, termed non-hydrolytic serinolysis, in which the side chain hydroxyl group of the serine supplies its oxygen atom to form the C-terminus of the beta chain, while the remainder of the serine residue undergoes an oxidative deamination to produce ammonia and the pyruvoyl prosthetic group on the alpha chain.

The protein resides in the cell membrane. It carries out the reaction a 1,2-diacyl-sn-glycero-3-phospho-L-serine + H(+) = a 1,2-diacyl-sn-glycero-3-phosphoethanolamine + CO2. Its pathway is phospholipid metabolism; phosphatidylethanolamine biosynthesis; phosphatidylethanolamine from CDP-diacylglycerol: step 2/2. Functionally, catalyzes the formation of phosphatidylethanolamine (PtdEtn) from phosphatidylserine (PtdSer). This Bradyrhizobium diazoefficiens (strain JCM 10833 / BCRC 13528 / IAM 13628 / NBRC 14792 / USDA 110) protein is Phosphatidylserine decarboxylase proenzyme.